The chain runs to 216 residues: Corrinoid protein DSY3155 (216 aa).

The B12-binding N-terminal domain maps to 1-90; sequence MIMSLLDELK…EIAKKGMSEG (90 aa). The B12-binding domain occupies 93–216; sequence KGKIVLGTVE…VELANKILGK (124 aa). His-106 contributes to the methylcob(III)alamin binding site.

The protein belongs to the methylamine corrinoid protein family.

Functionally, probably harbors a corrinoid prosthetic group and acts as a methyl group carrier between MtgB and MtgA. A methyl group from glycine betaine is likely first transferred to the corrinoid prosthetic group of the enzyme by MtgB, and then transferred to tetrahydrofolate (THF) by MtgA. The methyl group may then be ultimately converted to carbon dioxide, and its oxidation would also provide reducing equivalents for anaerobic respiration. Thus, may function in the pathway that allows anaerobic methylotrophic growth of D.hafniense using glycine betaine. This Desulfitobacterium hafniense (strain Y51) protein is Corrinoid protein DSY3155.